The primary structure comprises 289 residues: 4-diphosphocytidyl-2-C-methyl-D-erythritol kinase (289 aa).

Lys-10 is a catalytic residue. 94–104 (PVAAGLAGGSS) is a binding site for ATP. The active site involves Asp-136.

Belongs to the GHMP kinase family. IspE subfamily.

The catalysed reaction is 4-CDP-2-C-methyl-D-erythritol + ATP = 4-CDP-2-C-methyl-D-erythritol 2-phosphate + ADP + H(+). The protein operates within isoprenoid biosynthesis; isopentenyl diphosphate biosynthesis via DXP pathway; isopentenyl diphosphate from 1-deoxy-D-xylulose 5-phosphate: step 3/6. Functionally, catalyzes the phosphorylation of the position 2 hydroxy group of 4-diphosphocytidyl-2C-methyl-D-erythritol. The polypeptide is 4-diphosphocytidyl-2-C-methyl-D-erythritol kinase (Bacillus cereus (strain G9842)).